Reading from the N-terminus, the 131-residue chain is UPF0102 protein H16_A3579 (131 aa).

The protein belongs to the UPF0102 family.

The chain is UPF0102 protein H16_A3579 from Cupriavidus necator (strain ATCC 17699 / DSM 428 / KCTC 22496 / NCIMB 10442 / H16 / Stanier 337) (Ralstonia eutropha).